We begin with the raw amino-acid sequence, 394 residues long: Obg-like ATPase 1 (394 aa).

Residues 25 to 282 (LKIGIVGLPN…MAPDEAAKYC (258 aa)) form the OBG-type G domain. ATP contacts are provided by residues 34 to 39 (NVGKST), 56 to 60 (FCTIE), and 94 to 97 (DIAG). Mg(2+) contacts are provided by S38 and T58. F129 contacts GTP. ATP contacts are provided by residues 230 to 231 (NL), L231, and 263 to 265 (SGV). Position 263-265 (263-265 (SGV)) interacts with GTP. The TGS domain occupies 303-386 (NLIYFFTAGP…QDGDIIFFKF (84 aa)).

Belongs to the TRAFAC class OBG-HflX-like GTPase superfamily. OBG GTPase family. YchF/OLA1 subfamily. As to quaternary structure, monomer (Potential). Interacts with CAR4/GAP1. It depends on Mg(2+) as a cofactor.

The protein localises to the cytoplasm. Its subcellular location is the cytosol. Its activity is regulated as follows. Activated by GAP1. Functionally, hydrolyzes ATP, and can also hydrolyze GTP with lower efficiency. Has lower affinity for GTP (Potential). Exhibits GTPase activity. Confers sensitivity to salinity stress by suppressing the anti-oxidation enzymatic activities and increasing lipid peroxidation thus leading to the accumulation of reactive oxygen species (ROS). Acts as a negative regulator of disease resistance against bacterial pathogen. The chain is Obg-like ATPase 1 from Arabidopsis thaliana (Mouse-ear cress).